The following is a 326-amino-acid chain: tRNA-dihydrouridine(20/20a) synthase (326 aa).

FMN contacts are provided by residues 11-13 (PML) and Gln-63. Catalysis depends on Cys-93, which acts as the Proton donor. FMN-binding positions include Lys-132, His-165, 205–207 (NGG), and 227–228 (GR).

Belongs to the Dus family. DusA subfamily. FMN serves as cofactor.

The enzyme catalyses 5,6-dihydrouridine(20) in tRNA + NADP(+) = uridine(20) in tRNA + NADPH + H(+). The catalysed reaction is 5,6-dihydrouridine(20) in tRNA + NAD(+) = uridine(20) in tRNA + NADH + H(+). It carries out the reaction 5,6-dihydrouridine(20a) in tRNA + NADP(+) = uridine(20a) in tRNA + NADPH + H(+). It catalyses the reaction 5,6-dihydrouridine(20a) in tRNA + NAD(+) = uridine(20a) in tRNA + NADH + H(+). In terms of biological role, catalyzes the synthesis of 5,6-dihydrouridine (D), a modified base found in the D-loop of most tRNAs, via the reduction of the C5-C6 double bond in target uridines. Specifically modifies U20 and U20a in tRNAs. The polypeptide is tRNA-dihydrouridine(20/20a) synthase (Vibrio parahaemolyticus serotype O3:K6 (strain RIMD 2210633)).